The sequence spans 157 residues: Small ribosomal subunit protein uS7 (157 aa).

Belongs to the universal ribosomal protein uS7 family. As to quaternary structure, part of the 30S ribosomal subunit. Contacts proteins S9 and S11.

Its function is as follows. One of the primary rRNA binding proteins, it binds directly to 16S rRNA where it nucleates assembly of the head domain of the 30S subunit. Is located at the subunit interface close to the decoding center, probably blocks exit of the E-site tRNA. The polypeptide is Small ribosomal subunit protein uS7 (Roseiflexus castenholzii (strain DSM 13941 / HLO8)).